A 409-amino-acid chain; its full sequence is Elongation factor Tu (409 aa).

Positions 10-214 (KPHVNIGTIG…AVDSYIPDPE (205 aa)) constitute a tr-type G domain. Positions 19–26 (GHVDHGKT) are G1. 19 to 26 (GHVDHGKT) is a GTP binding site. Thr26 contacts Mg(2+). A G2 region spans residues 60-64 (GITIN). Residues 81–84 (DCPG) form a G3 region. Residues 81–85 (DCPGH) and 136–139 (NKED) contribute to the GTP site. The G4 stretch occupies residues 136–139 (NKED). The segment at 174–176 (SGL) is G5.

The protein belongs to the TRAFAC class translation factor GTPase superfamily. Classic translation factor GTPase family. EF-Tu/EF-1A subfamily. As to quaternary structure, monomer.

Its subcellular location is the cytoplasm. The enzyme catalyses GTP + H2O = GDP + phosphate + H(+). GTP hydrolase that promotes the GTP-dependent binding of aminoacyl-tRNA to the A-site of ribosomes during protein biosynthesis. The sequence is that of Elongation factor Tu from Trichormus variabilis (strain ATCC 29413 / PCC 7937) (Anabaena variabilis).